The chain runs to 47 residues: Large ribosomal subunit protein bL34 (47 aa).

The protein belongs to the bacterial ribosomal protein bL34 family.

The chain is Large ribosomal subunit protein bL34 from Mycobacteroides abscessus (strain ATCC 19977 / DSM 44196 / CCUG 20993 / CIP 104536 / JCM 13569 / NCTC 13031 / TMC 1543 / L948) (Mycobacterium abscessus).